The chain runs to 1188 residues: Carboxylic acid reductase (1188 aa).

AMP-binding positions include His-315, Ser-408, Asp-429 to Gly-430, Thr-434, Asp-507, Tyr-519 to Arg-522, Lys-528, and Lys-629. The region spanning Ala-665–Arg-743 is the Carrier domain. Ser-702 carries the post-translational modification O-(pantetheine 4'-phosphoryl)serine. NADP(+)-binding positions include Asn-801–Leu-804, Arg-828, Arg-838, Asp-868–Phe-869, Ser-894–Ala-896, Ser-934, Tyr-970, Lys-974, and Ser-997.

Belongs to the ATP-dependent AMP-binding enzyme family. Carboxylic acid reductase subfamily. Requires pantetheine 4'-phosphate as cofactor.

It carries out the reaction a carboxylate + ATP + NADPH + H(+) = an aldehyde + AMP + diphosphate + NADP(+). In terms of biological role, catalyzes the ATP- and NADPH-dependent reduction of carboxylic acids to the corresponding aldehydes. Catalyzes the reduction of a very wide range of carboxylic acids, including benzoic acids, heterocyclic, phenylacetic, phenylpropanoic and fatty acid substrates. The sequence is that of Carboxylic acid reductase from Segniliparus rugosus (strain ATCC BAA-974 / DSM 45345 / CCUG 50838 / CIP 108380 / JCM 13579 / CDC 945).